Consider the following 290-residue polypeptide: Pantothenate synthetase (290 aa).

ATP is bound at residue 34 to 41 (MGNLHDGH). The active-site Proton donor is the His41. A (R)-pantoate-binding site is contributed by Gln65. Residue Gln65 coordinates beta-alanine. ATP is bound at residue 156-159 (GKKD). Gln162 is a (R)-pantoate binding site. ATP is bound by residues Ala185 and 193–196 (LSSR).

This sequence belongs to the pantothenate synthetase family. In terms of assembly, homodimer.

The protein localises to the cytoplasm. The catalysed reaction is (R)-pantoate + beta-alanine + ATP = (R)-pantothenate + AMP + diphosphate + H(+). The protein operates within cofactor biosynthesis; (R)-pantothenate biosynthesis; (R)-pantothenate from (R)-pantoate and beta-alanine: step 1/1. Catalyzes the condensation of pantoate with beta-alanine in an ATP-dependent reaction via a pantoyl-adenylate intermediate. This chain is Pantothenate synthetase, found in Acidovorax ebreus (strain TPSY) (Diaphorobacter sp. (strain TPSY)).